Reading from the N-terminus, the 304-residue chain is Coenzyme PQQ synthesis protein B (304 aa).

This sequence belongs to the PqqB family.

It participates in cofactor biosynthesis; pyrroloquinoline quinone biosynthesis. May be involved in the transport of PQQ or its precursor to the periplasm. The polypeptide is Coenzyme PQQ synthesis protein B (Pseudomonas aeruginosa (strain LESB58)).